The primary structure comprises 145 residues: D-aminoacyl-tRNA deacylase (145 aa).

Residues 137-138 carry the Gly-cisPro motif, important for rejection of L-amino acids motif; it reads GP.

The protein belongs to the DTD family. Homodimer.

It is found in the cytoplasm. The enzyme catalyses glycyl-tRNA(Ala) + H2O = tRNA(Ala) + glycine + H(+). It carries out the reaction a D-aminoacyl-tRNA + H2O = a tRNA + a D-alpha-amino acid + H(+). In terms of biological role, an aminoacyl-tRNA editing enzyme that deacylates mischarged D-aminoacyl-tRNAs. Also deacylates mischarged glycyl-tRNA(Ala), protecting cells against glycine mischarging by AlaRS. Acts via tRNA-based rather than protein-based catalysis; rejects L-amino acids rather than detecting D-amino acids in the active site. By recycling D-aminoacyl-tRNA to D-amino acids and free tRNA molecules, this enzyme counteracts the toxicity associated with the formation of D-aminoacyl-tRNA entities in vivo and helps enforce protein L-homochirality. This Ruegeria pomeroyi (strain ATCC 700808 / DSM 15171 / DSS-3) (Silicibacter pomeroyi) protein is D-aminoacyl-tRNA deacylase.